We begin with the raw amino-acid sequence, 470 residues long: Ribosomal protein uS12 methylthiotransferase RimO (470 aa).

The MTTase N-terminal domain maps to 33–143 (NKIGFVSLGC…VLEHVHQYAP (111 aa)). Residues cysteine 42, cysteine 78, cysteine 107, cysteine 175, cysteine 179, and cysteine 182 each contribute to the [4Fe-4S] cluster site. Residues 161-398 (LTPKHYAYLK…MLVQQEISAA (238 aa)) form the Radical SAM core domain. The TRAM domain occupies 401–467 (QKRIGSTMQV…EYDLWGSILH (67 aa)).

It belongs to the methylthiotransferase family. RimO subfamily. [4Fe-4S] cluster serves as cofactor.

The protein localises to the cytoplasm. The catalysed reaction is L-aspartate(89)-[ribosomal protein uS12]-hydrogen + (sulfur carrier)-SH + AH2 + 2 S-adenosyl-L-methionine = 3-methylsulfanyl-L-aspartate(89)-[ribosomal protein uS12]-hydrogen + (sulfur carrier)-H + 5'-deoxyadenosine + L-methionine + A + S-adenosyl-L-homocysteine + 2 H(+). Its function is as follows. Catalyzes the methylthiolation of an aspartic acid residue of ribosomal protein uS12. The polypeptide is Ribosomal protein uS12 methylthiotransferase RimO (Vibrio cholerae serotype O1 (strain ATCC 39315 / El Tor Inaba N16961)).